A 235-amino-acid chain; its full sequence is Urease accessory protein UreF (235 aa).

Belongs to the UreF family. As to quaternary structure, ureD, UreF and UreG form a complex that acts as a GTP-hydrolysis-dependent molecular chaperone, activating the urease apoprotein by helping to assemble the nickel containing metallocenter of UreC. The UreE protein probably delivers the nickel.

The protein resides in the cytoplasm. Required for maturation of urease via the functional incorporation of the urease nickel metallocenter. The protein is Urease accessory protein UreF of Haemophilus influenzae (strain PittEE).